The primary structure comprises 338 residues: Lipoate-protein ligase A (338 aa).

The BPL/LPL catalytic domain maps to 29–216; sequence PTTQRVLFLW…AFFDYFGEQC (188 aa). ATP-binding positions include arginine 71, 76 to 79, and lysine 134; that span reads GAVF. Lysine 134 lines the (R)-lipoate pocket.

This sequence belongs to the LplA family. Monomer.

The protein localises to the cytoplasm. It catalyses the reaction L-lysyl-[lipoyl-carrier protein] + (R)-lipoate + ATP = N(6)-[(R)-lipoyl]-L-lysyl-[lipoyl-carrier protein] + AMP + diphosphate + H(+). It functions in the pathway protein modification; protein lipoylation via exogenous pathway; protein N(6)-(lipoyl)lysine from lipoate: step 1/2. Its pathway is protein modification; protein lipoylation via exogenous pathway; protein N(6)-(lipoyl)lysine from lipoate: step 2/2. Catalyzes both the ATP-dependent activation of exogenously supplied lipoate to lipoyl-AMP and the transfer of the activated lipoyl onto the lipoyl domains of lipoate-dependent enzymes. This is Lipoate-protein ligase A from Pectobacterium carotovorum subsp. carotovorum (strain PC1).